The primary structure comprises 374 residues: F-box/LRR-repeat protein 8 (374 aa).

The 47-residue stretch at 2–48 folds into the F-box domain; that stretch reads AEPGEQLPEEVLALIFRHLPLPDRAAAARVCRAWAAAATCSAVWHDT.

As to quaternary structure, directly interacts with SKP1 and CUL1.

Its function is as follows. Substrate-recognition component of the SCF (SKP1-CUL1-F-box protein)-type E3 ubiquitin ligase complex. This is F-box/LRR-repeat protein 8 (FBXL8) from Bos taurus (Bovine).